The primary structure comprises 109 residues: Large ribosomal subunit protein uL22 (109 aa).

Belongs to the universal ribosomal protein uL22 family. As to quaternary structure, part of the 50S ribosomal subunit.

Functionally, this protein binds specifically to 23S rRNA; its binding is stimulated by other ribosomal proteins, e.g. L4, L17, and L20. It is important during the early stages of 50S assembly. It makes multiple contacts with different domains of the 23S rRNA in the assembled 50S subunit and ribosome. The globular domain of the protein is located near the polypeptide exit tunnel on the outside of the subunit, while an extended beta-hairpin is found that lines the wall of the exit tunnel in the center of the 70S ribosome. This chain is Large ribosomal subunit protein uL22, found in Polynucleobacter asymbioticus (strain DSM 18221 / CIP 109841 / QLW-P1DMWA-1) (Polynucleobacter necessarius subsp. asymbioticus).